The primary structure comprises 200 residues: NADH-quinone oxidoreductase subunit C (200 aa).

The protein belongs to the complex I 30 kDa subunit family. As to quaternary structure, NDH-1 is composed of 14 different subunits. Subunits NuoB, C, D, E, F, and G constitute the peripheral sector of the complex.

It is found in the cell inner membrane. It carries out the reaction a quinone + NADH + 5 H(+)(in) = a quinol + NAD(+) + 4 H(+)(out). Functionally, NDH-1 shuttles electrons from NADH, via FMN and iron-sulfur (Fe-S) centers, to quinones in the respiratory chain. The immediate electron acceptor for the enzyme in this species is believed to be ubiquinone. Couples the redox reaction to proton translocation (for every two electrons transferred, four hydrogen ions are translocated across the cytoplasmic membrane), and thus conserves the redox energy in a proton gradient. This chain is NADH-quinone oxidoreductase subunit C, found in Ruegeria pomeroyi (strain ATCC 700808 / DSM 15171 / DSS-3) (Silicibacter pomeroyi).